We begin with the raw amino-acid sequence, 350 residues long: [LysW]-L-2-aminoadipate/[LysW]-L-glutamate phosphate reductase (350 aa).

10-13 (SGYT) contacts NADP(+). Residue Cys150 is part of the active site. Residue Asn317 participates in NADP(+) binding.

This sequence belongs to the NAGSA dehydrogenase family. Type 1 subfamily. LysY sub-subfamily.

Its subcellular location is the cytoplasm. The catalysed reaction is [amino-group carrier protein]-C-terminal-N-(1-carboxy-5-oxopentan-1-yl)-L-glutamine + phosphate + NADP(+) = [amino-group carrier protein]-C-terminal-N-(1-carboxy-5-phosphooxy-5-oxopentan-1-yl)-L-glutamine + NADPH + H(+). It catalyses the reaction [amino-group carrier protein]-C-terminal-gamma-(L-glutamyl-5-semialdehyde)-L-glutamate + phosphate + NADP(+) = [amino-group carrier protein]-C-terminal-gamma-(5-phospho-L-glutamyl)-L-glutamate + NADPH + H(+). It functions in the pathway amino-acid biosynthesis; L-lysine biosynthesis via AAA pathway; L-lysine from L-alpha-aminoadipate (Thermus route): step 3/5. Its pathway is amino-acid biosynthesis; L-arginine biosynthesis. Its function is as follows. Involved in both the arginine and lysine biosynthetic pathways. This Sulfolobus acidocaldarius (strain ATCC 33909 / DSM 639 / JCM 8929 / NBRC 15157 / NCIMB 11770) protein is [LysW]-L-2-aminoadipate/[LysW]-L-glutamate phosphate reductase.